Here is a 144-residue protein sequence, read N- to C-terminus: Cystatin-F (144 aa).

The signal sequence occupies residues 1 to 18 (MWLAILLALCCLTSDTHG). An N-linked (GlcNAc...) asparagine glycan is attached at Asn61. A Secondary area of contact motif is present at residues 80 to 84 (QVVKG). Cystine bridges form between Cys98/Cys109 and Cys123/Cys143.

It belongs to the cystatin family.

It is found in the secreted. Its function is as follows. Inhibits papain and cathepsin L but with affinities lower than other cystatins. May play a role in immune regulation through inhibition of a unique target in the hematopoietic system. The sequence is that of Cystatin-F (Cst7) from Mus musculus (Mouse).